A 37-amino-acid polypeptide reads, in one-letter code: Protamine Z3 (37 aa).

The tract at residues 1 to 37 is disordered; that stretch reads ARSRSRRSYGRGRRRGGRRRRRRRRRRRGGRRGRRSR.

As to expression, testis.

The protein resides in the nucleus. The protein localises to the chromosome. Its function is as follows. Protamines substitute for histones in the chromatin of sperm during the haploid phase of spermatogenesis. They compact sperm DNA into a highly condensed, stable and inactive complex. The protein is Protamine Z3 of Scyliorhinus canicula (Small-spotted catshark).